The chain runs to 398 residues: Pectate lyase 1 (398 aa).

Positions 1–25 (MGIKHCCYILYFTLALVTLLQPVRS) are cleaved as a signal peptide. The N-linked (GlcNAc...) asparagine glycan is linked to asparagine 37. Cysteines 55 and 72 form a disulfide. Aspartate 195, aspartate 219, and aspartate 223 together coordinate Ca(2+). Arginine 275 is a catalytic residue.

The protein belongs to the polysaccharide lyase 1 family. Amb a subfamily. As to quaternary structure, monomer. Ca(2+) serves as cofactor. Post-translationally, the N-terminus is blocked. Pollen and flowers.

It carries out the reaction Eliminative cleavage of (1-&gt;4)-alpha-D-galacturonan to give oligosaccharides with 4-deoxy-alpha-D-galact-4-enuronosyl groups at their non-reducing ends.. It participates in glycan metabolism; pectin degradation; 2-dehydro-3-deoxy-D-gluconate from pectin: step 2/5. In terms of biological role, has pectate lyase activity. In Ambrosia artemisiifolia (Common ragweed), this protein is Pectate lyase 1.